A 344-amino-acid chain; its full sequence is MTEPLKPRIDFDGPLEVDQNPKFRAQQTFDENQAQNFAPATLDEAQEEEGQVEAVMDAALRPKRSLWRKMVMGGLALFGASVVGQGVQWTMNACQTQDWVALGGCAAGALIIGAGVGSVVTEWRRLWRLRQRAHERDEARDLLHSHGTGKGRVFCEKLAQQAGIDQSHPALQRWYASIHETQNDREVVSLYAHLVQPVLDAQARREISRSAAESTLMIAVSPLALVDMAFIAWRNLRLINRIATLYGIELGYYSRLRLFKLVLLNIAFAGASELVREVGMDWMSQDLAARLSTRAAQGIGAGLLTARLGIKAMELCRPLPWIDDDKPRLGDFRRQLIGQVKETL.

3 helical membrane-spanning segments follow: residues 70 to 90, 100 to 120, and 213 to 233; these read MVMGGLALFGASVVGQGVQWT, VALGGCAAGALIIGAGVGSVV, and ESTLMIAVSPLALVDMAFIAW.

This sequence belongs to the UPF0283 family.

It localises to the cell inner membrane. The polypeptide is UPF0283 membrane protein YcjF (Shigella dysenteriae serotype 1 (strain Sd197)).